The chain runs to 114 residues: MSPSQLIGFLLLWVPASRGEIVLTQSPDFQSVTPKEKVTITCRASQSIGSSLHWYQQKPDQSPKLLIKYASQSISGVPSRFSGSGSGTDFTLTINSLEAEDAAAYYCHQSSSLP.

Positions 1–19 (MSPSQLIGFLLLWVPASRG) are cleaved as a signal peptide. Residues 20–42 (EIVLTQSPDFQSVTPKEKVTITC) form a framework-1 region. Residues 20-114 (EIVLTQSPDF…YYCHQSSSLP (95 aa)) enclose the Ig-like domain. C42 and C107 form a disulfide bridge. The complementarity-determining-1 stretch occupies residues 43 to 53 (RASQSIGSSLH). The segment at 54 to 68 (WYQQKPDQSPKLLIK) is framework-2. Residues 69 to 75 (YASQSIS) are complementarity-determining-2. The framework-3 stretch occupies residues 76–107 (GVPSRFSGSGSGTDFTLTINSLEAEDAAAYYC). Positions 108–114 (HQSSSLP) are complementarity-determining-3.

As to quaternary structure, immunoglobulins are composed of two identical heavy chains and two identical light chains; disulfide-linked.

The protein resides in the secreted. It localises to the cell membrane. In terms of biological role, v region of the variable domain of immunoglobulin light chains that participates in the antigen recognition. Immunoglobulins, also known as antibodies, are membrane-bound or secreted glycoproteins produced by B lymphocytes. In the recognition phase of humoral immunity, the membrane-bound immunoglobulins serve as receptors which, upon binding of a specific antigen, trigger the clonal expansion and differentiation of B lymphocytes into immunoglobulins-secreting plasma cells. Secreted immunoglobulins mediate the effector phase of humoral immunity, which results in the elimination of bound antigens. The antigen binding site is formed by the variable domain of one heavy chain, together with that of its associated light chain. Thus, each immunoglobulin has two antigen binding sites with remarkable affinity for a particular antigen. The variable domains are assembled by a process called V-(D)-J rearrangement and can then be subjected to somatic hypermutations which, after exposure to antigen and selection, allow affinity maturation for a particular antigen. The chain is Immunoglobulin kappa variable 6D-21 from Homo sapiens (Human).